The sequence spans 438 residues: Thymidine phosphorylase (438 aa).

It belongs to the thymidine/pyrimidine-nucleoside phosphorylase family. As to quaternary structure, homodimer.

It catalyses the reaction thymidine + phosphate = 2-deoxy-alpha-D-ribose 1-phosphate + thymine. Its pathway is pyrimidine metabolism; dTMP biosynthesis via salvage pathway; dTMP from thymine: step 1/2. Its function is as follows. The enzymes which catalyze the reversible phosphorolysis of pyrimidine nucleosides are involved in the degradation of these compounds and in their utilization as carbon and energy sources, or in the rescue of pyrimidine bases for nucleotide synthesis. The chain is Thymidine phosphorylase from Sinorhizobium fredii (strain NBRC 101917 / NGR234).